The chain runs to 295 residues: Ankyrin repeat and SOCS box protein 17 (295 aa).

Residues 146-176 (SGITPLLYVAQTRQSNILKILLQYGILEREN) form an ANK repeat. In terms of domain architecture, SOCS box spans 232 to 295 (LGRRPIISNW…CLQNYLNLES (64 aa)).

It belongs to the ankyrin SOCS box (ASB) family.

Its pathway is protein modification; protein ubiquitination. Functionally, may be a substrate-recognition component of a SCF-like ECS (Elongin-Cullin-SOCS-box protein) E3 ubiquitin-protein ligase complex which mediates the ubiquitination and subsequent proteasomal degradation of target proteins. The chain is Ankyrin repeat and SOCS box protein 17 (ASB17) from Bos taurus (Bovine).